A 452-amino-acid polypeptide reads, in one-letter code: Probable splicing factor, arginine/serine-rich 7 (452 aa).

RRM domains follow at residues 10–91 (KILH…YPNP) and 163–240 (RTVY…HSRV). A disordered region spans residues 258 to 452 (EEAIRMGRNG…GNGDVVMASE (195 aa)). The span at 259-272 (EAIRMGRNGDDRDR) shows a compositional bias: basic and acidic residues. Over residues 273-290 (RRSRSPRRRRSPSPRRRR) the composition is skewed to basic residues. A compositionally biased stretch (basic and acidic residues) spans 291–305 (DSRDRDRDRDRDRRR). Basic residues-rich tracts occupy residues 323-335 (KRSR…RRSR), 345-360 (KRSR…KSRD), and 370-382 (SKDR…RSRS). A compositionally biased stretch (basic and acidic residues) spans 383 to 421 (RSPEKRRDKEDRKTEKKENENESSLREKLLEKKAARKDS).

It belongs to the splicing factor SR family. Extensively phosphorylated on serine residues in the RS domain.

Its subcellular location is the nucleus. This Caenorhabditis elegans protein is Probable splicing factor, arginine/serine-rich 7 (rsp-7).